The primary structure comprises 273 residues: MHELLLFASVPAHQHHELLQQLAGLTAMQPRHRLERRLIFKAYRKPGLINTRVGASQDLQGNEMQRLNKMLNGGMFYTQVVGPVSEADFGAQSSAASSGDPDAPMSGTDTGTNFEYHPYSYENQPWKLEFRDIPEAGTRSAVTTRLMASASLPKGDITTPMNAWGYSFVTEYVVEGDVFILNDIVIYLHRVLHYPAESSGSHEPRRQLPPFQQMSPLEKTGSYVLQASIAVQDGGNQEMMKTASQHLFGLREQLKSAVRLEQADRLSLDTRAK.

The span at 90 to 106 (GAQSSAASSGDPDAPMS) shows a compositional bias: low complexity. A disordered region spans residues 90–114 (GAQSSAASSGDPDAPMSGTDTGTNF).

This sequence belongs to the Mediator complex subunit 18 family. Component of the Mediator complex.

It localises to the nucleus. Component of the Mediator complex, a coactivator involved in the regulated transcription of nearly all RNA polymerase II-dependent genes. Mediator functions as a bridge to convey information from gene-specific regulatory proteins to the basal RNA polymerase II transcription machinery. Mediator is recruited to promoters by direct interactions with regulatory proteins and serves as a scaffold for the assembly of a functional preinitiation complex with RNA polymerase II and the general transcription factors. The chain is Mediator of RNA polymerase II transcription subunit 18 (srb5) from Aspergillus oryzae (strain ATCC 42149 / RIB 40) (Yellow koji mold).